We begin with the raw amino-acid sequence, 315 residues long: Olfactory receptor 5A1 (315 aa).

Residues M1 to A28 lie on the Extracellular side of the membrane. The N-linked (GlcNAc...) asparagine glycan is linked to N8. The chain crosses the membrane as a helical span at residues L29–I52. At R53–T60 the chain is on the cytoplasmic side. A helical membrane pass occupies residues P61 to P82. The Extracellular segment spans residues N83–Q103. C100 and C192 are joined by a disulfide. The chain crosses the membrane as a helical span at residues F104–Y123. At D124–G142 the chain is on the cytoplasmic side. Residues L143–I161 form a helical membrane-spanning segment. Topologically, residues Q162–S198 are extracellular. Residues Q199 to G222 traverse the membrane as a helical segment. Residues Y223–K239 are Cytoplasmic-facing. A helical transmembrane segment spans residues A240–Y262. Residues L263–K275 lie on the Extracellular side of the membrane. The chain crosses the membrane as a helical span at residues V276 to L295. Residues R296–S315 lie on the Cytoplasmic side of the membrane.

This sequence belongs to the G-protein coupled receptor 1 family.

It is found in the cell membrane. In terms of biological role, odorant receptor. This chain is Olfactory receptor 5A1 (OR5A1), found in Homo sapiens (Human).